A 122-amino-acid polypeptide reads, in one-letter code: Large ribosomal subunit protein uL14 (122 aa).

Belongs to the universal ribosomal protein uL14 family. In terms of assembly, part of the 50S ribosomal subunit. Forms a cluster with proteins L3 and L19. In the 70S ribosome, L14 and L19 interact and together make contacts with the 16S rRNA in bridges B5 and B8.

Functionally, binds to 23S rRNA. Forms part of two intersubunit bridges in the 70S ribosome. The sequence is that of Large ribosomal subunit protein uL14 from Bacillus pumilus (strain SAFR-032).